Consider the following 435-residue polypeptide: MAPFGRNLLKTRHKNRSPTKDMDPEEKEIVVWVCQEEKIVCGLTKRTTSIDVIQALLEEHEATFGEKRFLLGKASDYCIVEKWRGSERALPPLTRILKLWKAWGDEQPNMQFVLVKTDAFLPVPLWRTAETKLVQNNEKPWELSPANYMKTLPPDKQKRIVRKTFRKLAKIRQDTGSHDRDNMECLVHLIISQDHTIHQQVQRMKELDMEIEKCEAKIHLDRIGNDGADYVQEAYLMPRSSEEEQKLDFQSEDNQTLEDLNDGEGVSQLEEQLQYYRALIDKLSAEIEREVKGAGTDGSEDMEGAAACELENSDLESVKCDLEKSMKAGLKIHSHLSGIQREIKYSDSLLQMKAREYELLAKEFSSLHISSKDGCQGKENRGKEAEASSSNGEIPPLTQRVFNTYTNDTDSDTGISSNHSQDSETTLGDVLLLAT.

The disordered stretch occupies residues 1-22 (MAPFGRNLLKTRHKNRSPTKDM). One can recognise a Ras-associating domain in the interval 25–119 (EEKEIVVWVC…MQFVLVKTDA (95 aa)). Residues 195–291 (HTIHQQVQRM…KLSAEIEREV (97 aa)) are a coiled coil. Residues 371–423 (SKDGCQGKENRGKEAEASSSNGEIPPLTQRVFNTYTNDTDSDTGISSNHSQDS) are disordered. Positions 375 to 386 (CQGKENRGKEAE) are enriched in basic and acidic residues. Residues 400–423 (RVFNTYTNDTDSDTGISSNHSQDS) are compositionally biased toward polar residues.

Interacts with PAM. In terms of tissue distribution, testis, kidney, skeletal muscle, liver, lung, brain, heart, pituitary gland, adrenal gland and ovary.

It localises to the endosome. May play a role in regulating vesicuar trafficking in cells. In Rattus norvegicus (Rat), this protein is Ras association domain-containing protein 9 (Rassf9).